The sequence spans 675 residues: NADH-quinone oxidoreductase subunit G (675 aa).

The 2Fe-2S ferredoxin-type domain maps to 1–78; that stretch reads MIKLIIDGSE…GMVIHTDTSM (78 aa). Positions 34, 45, 48, and 62 each coordinate [2Fe-2S] cluster. The 40-residue stretch at 78 to 117 folds into the 4Fe-4S His(Cys)3-ligated-type domain; that stretch reads MVKKAREGVMEFLLINHPLDCPICDQGGECDLQDQAFRYG. The [4Fe-4S] cluster site is built by H94, C98, C101, C107, C146, C149, C152, and C196. The region spanning 215–271 is the 4Fe-4S Mo/W bis-MGD-type domain; the sequence is LKHTASIGVHDAEGSNIRIDSRADEIMRILPSVNEAINEAWISDKNRFCYDGLKYQR.

It belongs to the complex I 75 kDa subunit family. [2Fe-2S] cluster is required as a cofactor. It depends on [4Fe-4S] cluster as a cofactor.

It catalyses the reaction a quinone + NADH + 5 H(+)(in) = a quinol + NAD(+) + 4 H(+)(out). In terms of biological role, NDH-1 shuttles electrons from NADH, via FMN and iron-sulfur (Fe-S) centers, to quinones in the respiratory chain. Couples the redox reaction to proton translocation (for every two electrons transferred, four hydrogen ions are translocated across the cytoplasmic membrane), and thus conserves the redox energy in a proton gradient. The sequence is that of NADH-quinone oxidoreductase subunit G (nuoG) from Rickettsia typhi (strain ATCC VR-144 / Wilmington).